Here is a 412-residue protein sequence, read N- to C-terminus: Mannose-6-phosphate isomerase (412 aa).

Residues Q99, H101, E126, and H265 each contribute to the Zn(2+) site. The active site involves R284.

The protein belongs to the mannose-6-phosphate isomerase type 1 family. It depends on Zn(2+) as a cofactor.

The protein resides in the cytoplasm. It is found in the nucleus. It catalyses the reaction D-mannose 6-phosphate = D-fructose 6-phosphate. It functions in the pathway nucleotide-sugar biosynthesis; GDP-alpha-D-mannose biosynthesis; alpha-D-mannose 1-phosphate from D-fructose 6-phosphate: step 1/2. Functionally, involved in the synthesis of the GDP-mannose and dolichol-phosphate-mannose required for a number of critical mannosyl transfer reactions. The protein is Mannose-6-phosphate isomerase (pmi40) of Schizosaccharomyces pombe (strain 972 / ATCC 24843) (Fission yeast).